Reading from the N-terminus, the 121-residue chain is Small ribosomal subunit protein uS13 (121 aa).

Residues 95–121 (GLPVRGQKTKTNARTRKGKRKTVGAKS) are disordered.

This sequence belongs to the universal ribosomal protein uS13 family. Part of the 30S ribosomal subunit. Forms a loose heterodimer with protein S19. Forms two bridges to the 50S subunit in the 70S ribosome.

Its function is as follows. Located at the top of the head of the 30S subunit, it contacts several helices of the 16S rRNA. In the 70S ribosome it contacts the 23S rRNA (bridge B1a) and protein L5 of the 50S subunit (bridge B1b), connecting the 2 subunits; these bridges are implicated in subunit movement. Contacts the tRNAs in the A and P-sites. This is Small ribosomal subunit protein uS13 from Campylobacter jejuni subsp. jejuni serotype O:6 (strain 81116 / NCTC 11828).